We begin with the raw amino-acid sequence, 305 residues long: Fructose-bisphosphate aldolase (305 aa).

D-glyceraldehyde 3-phosphate is bound at residue S49. The active-site Proton donor is D80. Zn(2+) contacts are provided by H81, D102, E132, and H178. Position 179 (G179) interacts with dihydroxyacetone phosphate. Position 208 (H208) interacts with Zn(2+). Dihydroxyacetone phosphate-binding positions include 209-211 (GAS) and 251-254 (NTDT).

Belongs to the class II fructose-bisphosphate aldolase family. As to quaternary structure, homotetramer. Zn(2+) serves as cofactor.

The catalysed reaction is beta-D-fructose 1,6-bisphosphate = D-glyceraldehyde 3-phosphate + dihydroxyacetone phosphate. It functions in the pathway carbohydrate degradation; glycolysis; D-glyceraldehyde 3-phosphate and glycerone phosphate from D-glucose: step 4/4. In terms of biological role, catalyzes the aldol condensation of dihydroxyacetone phosphate (DHAP or glycerone-phosphate) with glyceraldehyde 3-phosphate (G3P) to form fructose 1,6-bisphosphate (FBP) in gluconeogenesis and the reverse reaction in glycolysis. In Thermus caldophilus, this protein is Fructose-bisphosphate aldolase.